The sequence spans 245 residues: 1-(5-phosphoribosyl)-5-[(5-phosphoribosylamino)methylideneamino] imidazole-4-carboxamide isomerase (245 aa).

The Proton acceptor role is filled by Asp-7. Asp-129 acts as the Proton donor in catalysis.

This sequence belongs to the HisA/HisF family.

Its subcellular location is the cytoplasm. It catalyses the reaction 1-(5-phospho-beta-D-ribosyl)-5-[(5-phospho-beta-D-ribosylamino)methylideneamino]imidazole-4-carboxamide = 5-[(5-phospho-1-deoxy-D-ribulos-1-ylimino)methylamino]-1-(5-phospho-beta-D-ribosyl)imidazole-4-carboxamide. It functions in the pathway amino-acid biosynthesis; L-histidine biosynthesis; L-histidine from 5-phospho-alpha-D-ribose 1-diphosphate: step 4/9. This is 1-(5-phosphoribosyl)-5-[(5-phosphoribosylamino)methylideneamino] imidazole-4-carboxamide isomerase from Salmonella agona (strain SL483).